Reading from the N-terminus, the 336-residue chain is Aspartate--ammonia ligase (336 aa).

The protein belongs to the class-II aminoacyl-tRNA synthetase family. AsnA subfamily.

The protein localises to the cytoplasm. It catalyses the reaction L-aspartate + NH4(+) + ATP = L-asparagine + AMP + diphosphate + H(+). It functions in the pathway amino-acid biosynthesis; L-asparagine biosynthesis; L-asparagine from L-aspartate (ammonia route): step 1/1. The chain is Aspartate--ammonia ligase from Clostridium perfringens (strain SM101 / Type A).